We begin with the raw amino-acid sequence, 446 residues long: Tubulin beta chain (446 aa).

8 residues coordinate GTP: Gln11, Glu69, Ser138, Gly142, Thr143, Gly144, Asn204, and Asn226. Glu69 serves as a coordination point for Mg(2+). Residues 422 to 446 are disordered; sequence YQQYQDAGIDEEEEEYEEELPEGEE. Residues 429–446 show a composition bias toward acidic residues; the sequence is GIDEEEEEYEEELPEGEE.

The protein belongs to the tubulin family. Dimer of alpha and beta chains. A typical microtubule is a hollow water-filled tube with an outer diameter of 25 nm and an inner diameter of 15 nM. Alpha-beta heterodimers associate head-to-tail to form protofilaments running lengthwise along the microtubule wall with the beta-tubulin subunit facing the microtubule plus end conferring a structural polarity. Microtubules usually have 13 protofilaments but different protofilament numbers can be found in some organisms and specialized cells. Requires Mg(2+) as cofactor.

It is found in the cytoplasm. It localises to the cytoskeleton. In terms of biological role, tubulin is the major constituent of microtubules, a cylinder consisting of laterally associated linear protofilaments composed of alpha- and beta-tubulin heterodimers. Microtubules grow by the addition of GTP-tubulin dimers to the microtubule end, where a stabilizing cap forms. Below the cap, tubulin dimers are in GDP-bound state, owing to GTPase activity of alpha-tubulin. The protein is Tubulin beta chain (TUB2) of Gibberella zeae (strain ATCC MYA-4620 / CBS 123657 / FGSC 9075 / NRRL 31084 / PH-1) (Wheat head blight fungus).